The following is a 482-amino-acid chain: tRNA sulfurtransferase (482 aa).

The THUMP domain occupies 58–160 (VEALQELSRV…GNKAYLYSNV (103 aa)). ATP is bound by residues 178–179 (LF), 203–204 (HY), Arg-260, Gly-282, and Gln-291. Cys-341 and Cys-444 form a disulfide bridge. The Rhodanese domain occupies 400–482 (IPGDSIIIDV…RYRAGLEKTR (83 aa)). The active-site Cysteine persulfide intermediate is the Cys-444.

The protein belongs to the ThiI family.

Its subcellular location is the cytoplasm. It catalyses the reaction [ThiI sulfur-carrier protein]-S-sulfanyl-L-cysteine + a uridine in tRNA + 2 reduced [2Fe-2S]-[ferredoxin] + ATP + H(+) = [ThiI sulfur-carrier protein]-L-cysteine + a 4-thiouridine in tRNA + 2 oxidized [2Fe-2S]-[ferredoxin] + AMP + diphosphate. The enzyme catalyses [ThiS sulfur-carrier protein]-C-terminal Gly-Gly-AMP + S-sulfanyl-L-cysteinyl-[cysteine desulfurase] + AH2 = [ThiS sulfur-carrier protein]-C-terminal-Gly-aminoethanethioate + L-cysteinyl-[cysteine desulfurase] + A + AMP + 2 H(+). The protein operates within cofactor biosynthesis; thiamine diphosphate biosynthesis. Catalyzes the ATP-dependent transfer of a sulfur to tRNA to produce 4-thiouridine in position 8 of tRNAs, which functions as a near-UV photosensor. Also catalyzes the transfer of sulfur to the sulfur carrier protein ThiS, forming ThiS-thiocarboxylate. This is a step in the synthesis of thiazole, in the thiamine biosynthesis pathway. The sulfur is donated as persulfide by IscS. This Desulfurococcus amylolyticus (strain DSM 18924 / JCM 16383 / VKM B-2413 / 1221n) (Desulfurococcus kamchatkensis) protein is tRNA sulfurtransferase.